The following is a 488-amino-acid chain: Ribulose bisphosphate carboxylase large chain (488 aa).

Substrate-binding residues include Asn-128 and Thr-178. The active-site Proton acceptor is the Lys-180. Lys-182 is a substrate binding site. Mg(2+) is bound by residues Lys-206, Asp-208, and Glu-209. At Lys-206 the chain carries N6-carboxylysine. Catalysis depends on His-298, which acts as the Proton acceptor. Arg-299, His-331, and Ser-383 together coordinate substrate.

This sequence belongs to the RuBisCO large chain family. Type I subfamily. In terms of assembly, heterohexadecamer of 8 large chains and 8 small chains. Mg(2+) serves as cofactor.

It catalyses the reaction 2 (2R)-3-phosphoglycerate + 2 H(+) = D-ribulose 1,5-bisphosphate + CO2 + H2O. It carries out the reaction D-ribulose 1,5-bisphosphate + O2 = 2-phosphoglycolate + (2R)-3-phosphoglycerate + 2 H(+). RuBisCO catalyzes two reactions: the carboxylation of D-ribulose 1,5-bisphosphate, the primary event in carbon dioxide fixation, as well as the oxidative fragmentation of the pentose substrate. Both reactions occur simultaneously and in competition at the same active site. This Variovorax paradoxus (strain S110) protein is Ribulose bisphosphate carboxylase large chain.